Consider the following 1183-residue polypeptide: Probable RNA-dependent RNA polymerase 4 (1183 aa).

This sequence belongs to the RdRP family. In terms of tissue distribution, expressed in shoot apical meristem (SAM) and panicles.

The catalysed reaction is RNA(n) + a ribonucleoside 5'-triphosphate = RNA(n+1) + diphosphate. In terms of biological role, probably involved in the RNA silencing pathway and required for the generation of small interfering RNAs (siRNAs). This is Probable RNA-dependent RNA polymerase 4 (RDR4) from Oryza sativa subsp. japonica (Rice).